Here is a 90-residue protein sequence, read N- to C-terminus: Small ribosomal subunit protein uS15 (90 aa).

Belongs to the universal ribosomal protein uS15 family. As to quaternary structure, part of the 30S ribosomal subunit. Forms a bridge to the 50S subunit in the 70S ribosome, contacting the 23S rRNA.

In terms of biological role, one of the primary rRNA binding proteins, it binds directly to 16S rRNA where it helps nucleate assembly of the platform of the 30S subunit by binding and bridging several RNA helices of the 16S rRNA. Forms an intersubunit bridge (bridge B4) with the 23S rRNA of the 50S subunit in the ribosome. In Campylobacter lari (strain RM2100 / D67 / ATCC BAA-1060), this protein is Small ribosomal subunit protein uS15.